The sequence spans 280 residues: 4-diphosphocytidyl-2-C-methyl-D-erythritol kinase (280 aa).

The active site involves Lys8. Residue 91–101 (PVAAGLAGGST) coordinates ATP. The active site involves Asp133.

The protein belongs to the GHMP kinase family. IspE subfamily.

The catalysed reaction is 4-CDP-2-C-methyl-D-erythritol + ATP = 4-CDP-2-C-methyl-D-erythritol 2-phosphate + ADP + H(+). It functions in the pathway isoprenoid biosynthesis; isopentenyl diphosphate biosynthesis via DXP pathway; isopentenyl diphosphate from 1-deoxy-D-xylulose 5-phosphate: step 3/6. Functionally, catalyzes the phosphorylation of the position 2 hydroxy group of 4-diphosphocytidyl-2C-methyl-D-erythritol. The polypeptide is 4-diphosphocytidyl-2-C-methyl-D-erythritol kinase (Clostridium botulinum (strain Okra / Type B1)).